An 83-amino-acid polypeptide reads, in one-letter code: High-potential iron-sulfur protein (83 aa).

Residues Cys43, Cys46, Cys61, and Cys75 each coordinate [4Fe-4S] cluster.

Belongs to the high-potential iron-sulfur protein (HiPIP) family. As to quaternary structure, homodimer.

It is found in the periplasm. Functionally, specific class of high-redox-potential 4Fe-4S ferredoxins. Functions in anaerobic electron transport in most purple and in some other photosynthetic bacteria and in at least one genus (Paracoccus) of halophilic, denitrifying bacteria. The sequence is that of High-potential iron-sulfur protein from Isochromatium buderi (Chromatium buderi).